We begin with the raw amino-acid sequence, 303 residues long: Sulfotransferase 6B1 (303 aa).

65–70 contacts 3'-phosphoadenylyl sulfate; it reads KCGSNW. His-118 functions as the Proton acceptor in the catalytic mechanism. 3'-phosphoadenylyl sulfate contacts are provided by residues Arg-140, Ser-148, Tyr-203, 237–242, and 259–261; these read STFQAM and RKG.

Belongs to the sulfotransferase 1 family. In terms of tissue distribution, specifically expressed in kidney and testis.

It localises to the cytoplasm. It is found in the cytosol. It carries out the reaction thyroxine + 3'-phosphoadenylyl sulfate = thyroxine sulfate + adenosine 3',5'-bisphosphate + H(+). In terms of biological role, sulfotransferase that utilizes 3'-phospho-5'-adenylyl sulfate (PAPS) as sulfonate donor to catalyze the sulfate conjugation of thyroxine. Involved in the metabolism of thyroxine. This is Sulfotransferase 6B1 (SULT6B1) from Homo sapiens (Human).